Reading from the N-terminus, the 366-residue chain is Inhibin alpha chain (366 aa).

Positions 1–20 (MVSQRSLLLLLLLTLRDVDS) are cleaved as a signal peptide. Residues 21 to 63 (CQGPELVRELVLAKVKALFLDALGPPAMDGEGGDPGIRRLPRR) constitute a propeptide that is removed on maturation. A propeptide spans 64–233 (HAVGGFMHRT…APSAGERARR (170 aa)) (inhibin alpha N-terminal region). Residues N147 and N269 are each glycosylated (N-linked (GlcNAc...) asparagine). 3 cysteine pairs are disulfide-bonded: C263/C328, C292/C363, and C296/C365.

Belongs to the TGF-beta family. As to quaternary structure, dimeric, linked by one or more disulfide bonds. Activin B is a dimer of alpha and beta-B. Inhibin A is a dimer of alpha and beta-A. Inhibin B is a dimer of alpha and beta-B. Interacts with TGFBR3L; this interaction regulates female fertility. In terms of processing, proteolytic processing yields a number of bioactive forms, consisting either solely of the mature alpha chain, of the most N-terminal propeptide linked through a disulfide bond to the mature alpha chain, or of the entire proprotein.

It is found in the secreted. Inhibins and activins inhibit and activate, respectively, the secretion of follitropin by the pituitary gland. Inhibins/activins are involved in regulating a number of diverse functions such as hypothalamic and pituitary hormone secretion, gonadal hormone secretion, germ cell development and maturation, erythroid differentiation, insulin secretion, nerve cell survival, embryonic axial development or bone growth, depending on their subunit composition. Inhibins appear to oppose the functions of activins. Functionally, inhibin A is a dimer of alpha/INHA and beta-A/INHBA that functions as a feedback regulator in the hypothalamic-pituitary-gonadal (HPG) axis. Inhibits the secretion of FSH from the anterior pituitary gland by acting on pituitary gonadotrope cells. Antagonizes activin A by binding to the proteoglycan, betaglycan, and forming a stable complex with and, thereby, sequestering type II activin receptors while excluding type I receptor. In terms of biological role, inhibin B is a dimer of alpha and beta-B that plays a crucial role in the regulation of the reproductive system by inhibiting the secretion of follicle-stimulating hormone (FSH) from the anterior pituitary gland. Thereby, maintains reproductive homeostasis in both males and females. Acts as a more potent suppressor of FSH release than inhibin A. Functions as competitive receptor antagonist binding activin type II receptors with high affinity in the presence of the TGF-beta type III coreceptor/TGFBR3L. This chain is Inhibin alpha chain (Inha), found in Mus musculus (Mouse).